We begin with the raw amino-acid sequence, 433 residues long: Type I acyl-CoA thioesterase mpaH' (433 aa).

The tract at residues 58–246 (HGVGLPKELY…IKALFGTTAD (189 aa)) is abhydrolase domain. Substrate is bound at residue valine 60. The Nucleophile role is filled by serine 139. Residue phenylalanine 140 coordinates substrate. Catalysis depends on residues aspartate 163 and histidine 365.

It belongs to the AB hydrolase superfamily. MpaH hydrolase family. In terms of assembly, homodimer.

It localises to the peroxisome matrix. It catalyses the reaction mycophenolyl-CoA + H2O = mycophenolate + CoA + H(+). Its pathway is secondary metabolite biosynthesis; terpenoid biosynthesis. In terms of biological role, type I acyl-CoA thioesterase; part of the gene cluster that mediates the biosynthesis of mycophenolic acid (MPA), the first isolated antibiotic natural product in the world obtained from a culture of Penicillium brevicompactum in 1893. MpaH' acts as a peroxisomal acyl-CoA hydrolase that converts MPA-CoA into the final product MPA. The first step of the pathway is the synthesis of 5-methylorsellinic acid (5MOA) by the cytosolic polyketide synthase mpaC. 5MOA is then converted to the phthalide compound 5,7-dihydroxy-4,6-dimethylphthalide (DHMP) by the endoplasmic reticulum-bound cytochrome P450 monooxygenase mpaDE. MpaDE first catalyzes hydroxylation of 5-MOA to 4,6-dihydroxy-2-(hydroxymethyl)-3-methylbenzoic acid (DHMB). MpaDE then acts as a lactone synthase that catalyzes the ring closure to convert DHMB into DHMP. The next step is the prenylation of DHMP by the Golgi apparatus-associated prenyltransferase mpaA to yield farnesyl-DHMP (FDHMP). The ER-bound oxygenase mpaB then mediates the oxidative cleavage the C19-C20 double bond in FDHMP to yield FDHMP-3C via a mycophenolic aldehyde intermediate. The O-methyltransferase mpaG catalyzes the methylation of FDHMP-3C to yield MFDHMP-3C. After the cytosolic methylation of FDHMP-3C, MFDHMP-3C enters into peroxisomes probably via free diffusion due to its low molecular weight. Upon a peroxisomal CoA ligation reaction, catalyzed by a beta-oxidation component enzyme acyl-CoA ligase ACL891, MFDHMP-3C-CoA would then be restricted to peroxisomes for the following beta-oxidation pathway steps. The peroxisomal beta-oxidation machinery than converts MFDHMP-3C-CoA into MPA_CoA, via a beta-oxidation chain-shortening process. Finally mpaH acts as a peroxisomal acyl-CoA hydrolase with high substrate specificity toward MPA-CoA to release the final product MPA. The sequence is that of Type I acyl-CoA thioesterase mpaH' from Penicillium brevicompactum.